Here is a 619-residue protein sequence, read N- to C-terminus: Dihydroxy-acid dehydratase 1 (619 aa).

Residue aspartate 81 coordinates Mg(2+). Cysteine 122 is a [2Fe-2S] cluster binding site. The Mg(2+) site is built by aspartate 123 and lysine 124. N6-carboxylysine is present on lysine 124. Cysteine 198 provides a ligand contact to [2Fe-2S] cluster. Glutamate 494 provides a ligand contact to Mg(2+). Serine 520 functions as the Proton acceptor in the catalytic mechanism.

It belongs to the IlvD/Edd family. As to quaternary structure, homodimer. The cofactor is [2Fe-2S] cluster. Mg(2+) serves as cofactor.

The catalysed reaction is (2R)-2,3-dihydroxy-3-methylbutanoate = 3-methyl-2-oxobutanoate + H2O. It catalyses the reaction (2R,3R)-2,3-dihydroxy-3-methylpentanoate = (S)-3-methyl-2-oxopentanoate + H2O. It participates in amino-acid biosynthesis; L-isoleucine biosynthesis; L-isoleucine from 2-oxobutanoate: step 3/4. Its pathway is amino-acid biosynthesis; L-valine biosynthesis; L-valine from pyruvate: step 3/4. Its function is as follows. Functions in the biosynthesis of branched-chain amino acids. Catalyzes the dehydration of (2R,3R)-2,3-dihydroxy-3-methylpentanoate (2,3-dihydroxy-3-methylvalerate) into 2-oxo-3-methylpentanoate (2-oxo-3-methylvalerate) and of (2R)-2,3-dihydroxy-3-methylbutanoate (2,3-dihydroxyisovalerate) into 2-oxo-3-methylbutanoate (2-oxoisovalerate), the penultimate precursor to L-isoleucine and L-valine, respectively. This chain is Dihydroxy-acid dehydratase 1, found in Bordetella pertussis (strain Tohama I / ATCC BAA-589 / NCTC 13251).